A 572-amino-acid polypeptide reads, in one-letter code: BOS complex subunit ncln (572 aa).

The N-terminal stretch at 1–35 (MFEEAGEVLENMLKVSFPLSLVLFLVLVCPLRAEA) is a signal peptide. Topologically, residues 36-530 (AHEFSVYRMQ…TMNAYRVKPA (495 aa)) are extracellular. Asn108, Asn234, and Asn436 each carry an N-linked (GlcNAc...) asparagine glycan. The helical transmembrane segment at 531-551 (IFDLLLAVCIASYLGVLYLAI) threads the bilayer. Over 552-572 (QNFGLLYGFLRRVTAPRVKQH) the chain is Cytoplasmic.

This sequence belongs to the nicastrin family. As to quaternary structure, component of the multi-pass translocon (MPT) complex.

Its subcellular location is the endoplasmic reticulum membrane. In terms of biological role, component of the multi-pass translocon (MPT) complex that mediates insertion of multi-pass membrane proteins into the lipid bilayer of membranes. The MPT complex takes over after the SEC61 complex: following membrane insertion of the first few transmembrane segments of proteins by the SEC61 complex, the MPT complex occludes the lateral gate of the SEC61 complex to promote insertion of subsequent transmembrane regions. Antagonizes Nodal signaling and subsequent organization of axial structures during mesodermal patterning. Ectopic expression results in cyclopia, due to a defect in mesendoderm patterning. This chain is BOS complex subunit ncln (ncln), found in Danio rerio (Zebrafish).